Here is a 501-residue protein sequence, read N- to C-terminus: Aldehyde dehydrogenase, cytosolic 1 (501 aa).

Ser-2 carries the N-acetylserine modification. N6-acetyllysine is present on residues Lys-91 and Lys-128. Residue 246 to 251 (GSTEVG) coordinates NAD(+). Residue Lys-252 is modified to N6-acetyllysine. The active-site Proton acceptor is the Glu-269. Catalysis depends on Cys-303, which acts as the Nucleophile. N6-acetyllysine occurs at positions 353, 367, and 410. Residue Ser-413 is modified to Phosphoserine. An N6-acetyllysine mark is found at Lys-419, Lys-435, and Lys-495.

Belongs to the aldehyde dehydrogenase family. In terms of assembly, homotetramer. Very low levels in lung and liver.

It localises to the cytoplasm. The enzyme catalyses an aldehyde + NAD(+) + H2O = a carboxylate + NADH + 2 H(+). It participates in alcohol metabolism; ethanol degradation; acetate from ethanol: step 2/2. In terms of biological role, can oxidize benzaldehyde, propionaldehyde and acetaldehyde. No detectable activity with retinal. The polypeptide is Aldehyde dehydrogenase, cytosolic 1 (Aldh1a7) (Rattus norvegicus (Rat)).